The sequence spans 806 residues: Zygotic DNA replication licensing factor mcm3 (806 aa).

The MCM domain maps to 295–502 (VFEQLSRSLA…HDREISDHVL (208 aa)). Residue 345–352 (GDPSVAKS) participates in ATP binding. Residues 477-480 (SRFD) carry the Arginine finger motif. The disordered stretch occupies residues 662 to 738 (KKRRRREGES…TDSSAKPGLS (77 aa)). Basic and acidic residues predominate over residues 693–702 (AQDGESHDPY).

This sequence belongs to the MCM family. As to quaternary structure, component of the mcm2-7 complex (RLF-M). The complex forms a toroidal hexameric ring with the proposed subunit order mcm2-mcm6-mcm4-mcm7-mcm3-mcm5. Begins to associate with zmcm6 into mcm complexes at the neurula stage. Component of the CMG helicase complex, composed of the mcm2-7 complex, the GINS complex and cdc45.

The protein localises to the nucleus. It localises to the chromosome. The enzyme catalyses ATP + H2O = ADP + phosphate + H(+). Its function is as follows. Acts as a component of the mcm2-7 complex (mcm complex) which is the putative replicative helicase essential for 'once per cell cycle' DNA replication initiation and elongation in eukaryotic cells. The active ATPase sites in the mcm2-7 ring are formed through the interaction surfaces of two neighboring subunits such that a critical structure of a conserved arginine finger motif is provided in trans relative to the ATP-binding site of the Walker A box of the adjacent subunit. The six ATPase active sites, however, are likely to contribute differentially to the complex helicase activity. The existence of maternal and zygotic forms of mcm3 and mcm6 suggests that specific forms of mcm2-7 complexes may be used during different stages of development. The polypeptide is Zygotic DNA replication licensing factor mcm3 (Xenopus laevis (African clawed frog)).